We begin with the raw amino-acid sequence, 297 residues long: Phosphoribosylaminoimidazole-succinocarboxamide synthase (297 aa).

The protein belongs to the SAICAR synthetase family.

It catalyses the reaction 5-amino-1-(5-phospho-D-ribosyl)imidazole-4-carboxylate + L-aspartate + ATP = (2S)-2-[5-amino-1-(5-phospho-beta-D-ribosyl)imidazole-4-carboxamido]succinate + ADP + phosphate + 2 H(+). Its pathway is purine metabolism; IMP biosynthesis via de novo pathway; 5-amino-1-(5-phospho-D-ribosyl)imidazole-4-carboxamide from 5-amino-1-(5-phospho-D-ribosyl)imidazole-4-carboxylate: step 1/2. The polypeptide is Phosphoribosylaminoimidazole-succinocarboxamide synthase (Corynebacterium diphtheriae (strain ATCC 700971 / NCTC 13129 / Biotype gravis)).